Consider the following 256-residue polypeptide: Adenosylcobinamide-GDP ribazoletransferase (256 aa).

6 helical membrane-spanning segments follow: residues 40 to 60 (YFPLIGWLVGAVAAAVYWLVL), 64 to 84 (PAQGVAVAVSMGATLLLTGAF), 114 to 134 (IGAFGAIAVCMALLLKWQLLS), 143 to 163 (ILVAMVAAHAASRAAAVSHLL), 194 to 214 (VVPLLWFGPMCAALIVVGLIL), and 234 to 254 (CLGMAQQIFELLILWGLLAWM).

It belongs to the CobS family. The cofactor is Mg(2+).

The protein resides in the cell inner membrane. The enzyme catalyses alpha-ribazole + adenosylcob(III)inamide-GDP = adenosylcob(III)alamin + GMP + H(+). The catalysed reaction is alpha-ribazole 5'-phosphate + adenosylcob(III)inamide-GDP = adenosylcob(III)alamin 5'-phosphate + GMP + H(+). It functions in the pathway cofactor biosynthesis; adenosylcobalamin biosynthesis; adenosylcobalamin from cob(II)yrinate a,c-diamide: step 7/7. In terms of biological role, joins adenosylcobinamide-GDP and alpha-ribazole to generate adenosylcobalamin (Ado-cobalamin). Also synthesizes adenosylcobalamin 5'-phosphate from adenosylcobinamide-GDP and alpha-ribazole 5'-phosphate. This chain is Adenosylcobinamide-GDP ribazoletransferase, found in Ralstonia pickettii (strain 12J).